A 1735-amino-acid chain; its full sequence is Inactive tyrosine-protein kinase PEAK1 (1735 aa).

Disordered stretches follow at residues 26–66 (LHQL…PPVA) and 111–145 (LSQKPLNNNSEGDAEGFGSDPQQCANNDSAQKISN). Polar residues-rich tracts occupy residues 111 to 121 (LSQKPLNNNSE) and 130 to 145 (DPQQCANNDSAQKISN). Ser282 bears the Phosphoserine mark. Disordered regions lie at residues 324–410 (NSGV…SVKV), 491–514 (GRPKIKGSSSTPNSPVTSPALTPG), and 537–580 (SPRQ…SKTI). Low complexity predominate over residues 325-336 (SGVSYGQGSVQS). The span at 337–365 (TISSDCTSPGSSFTEESRSETASSLSQKV) shows a compositional bias: polar residues. Over residues 367–378 (NGGISPGNPGNS) the composition is skewed to low complexity. Over residues 384–393 (TESNFESPPG) the composition is skewed to polar residues. Residues 498–509 (SSSTPNSPVTSP) show a composition bias toward low complexity. Phosphoserine is present on residues Ser537, Ser569, and Ser584. Over residues 566–580 (APTSPTATNISSKTI) the composition is skewed to polar residues. Phosphotyrosine is present on residues Tyr632 and Tyr638. Position 645 is a phosphoserine (Ser645). Tyr662 carries the phosphotyrosine modification. 3 disordered regions span residues 663–762 (EEIE…REKA), 800–919 (PDAD…AADA), and 1019–1097 (RNSE…SATY). Composition is skewed to polar residues over residues 704-735 (QEFNNCLNRGQSSPQRSYSSTHSSPAKIQRPT), 745-757 (AQGSQVPGSSSNS), and 819-839 (LFTSQSSGEGEAHQTTESPTA). Phosphoserine is present on residues Ser824 and Ser825. The segment covering 847-863 (TKPVTSPPSKLVTSAQS) has biased composition (low complexity). The span at 864–873 (EPPPPFPPPR) shows a compositional bias: pro residues. Positions 879 to 901 (YHASNLLQRHFTNWTKPTSPTRS) are enriched in polar residues. A Phosphoserine modification is found at Ser897. 2 stretches are compositionally biased toward basic and acidic residues: residues 902 to 919 (TEAESILHSEGSRRAADA) and 1037 to 1055 (ACSRVTHEVAGELSPRDPR). The span at 1076–1086 (EREEEKDDTLD) shows a compositional bias: acidic residues. At Thr1141 the chain carries Phosphothreonine. Position 1177 is a phosphotyrosine (Tyr1177). The interval 1274 to 1300 (EVVGKLRSLHTDALKRLAVKCEDLFMA) is required for homodimerization. The 363-residue stretch at 1302–1664 (QKDQLRFGVD…LLWGPREDLF (363 aa)) folds into the Protein kinase domain. Phosphoserine is present on Ser1363. A disordered region spans residues 1394-1445 (WEDPDAPEKAEDGTEDSEEEGKAETLGGNPEPCSETEPSQKENQRVTNRKQR). The segment at 1659–1732 (PREDLFQIFT…DSLSYIVKIL (74 aa)) is required for homodimerization.

The protein belongs to the protein kinase superfamily. Homodimer. Interacts with BCAR1 and CRK. Interacts with PRAG1. Interacts (when phosphorylated at Tyr-1177) with SHC1 (via PID domain). Found in a complex with PPP1CA, PPP1CC and SHC1. Interacts (when phosphorylated at Tyr-632) with tensin TNS3 (when phosphorylated on the SH2 domain); TNS3 also interacts with integrins ITGB1, ITGB3 and ITGB5 and mediates their association with PEAK1. Post-translationally, phosphorylated on tyrosine in a CSK-dependent manner in response to adhesion to fibronectin and to EGF stimulation. Phosphorylation at Tyr-662 by a Src family kinase controls subcellular localization to focal adhesion and focal adhesion dynamics. Phosphorylation at Tyr-1177 is essential for binding to SHC1. Phosphorylation at Tyr-632 promotes interaction with tensin TNS3.

It localises to the cytoplasm. The protein resides in the cytoskeleton. It is found in the cell junction. The protein localises to the focal adhesion. Probable catalytically inactive kinase. Scaffolding protein that regulates the cytoskeleton to control cell spreading and migration by modulating focal adhesion dynamics. Acts as a scaffold for mediating EGFR signaling. The sequence is that of Inactive tyrosine-protein kinase PEAK1 (Peak1) from Mus musculus (Mouse).